The primary structure comprises 185 residues: Elongation factor P (185 aa).

The protein belongs to the elongation factor P family.

Its subcellular location is the cytoplasm. It functions in the pathway protein biosynthesis; polypeptide chain elongation. In terms of biological role, involved in peptide bond synthesis. Stimulates efficient translation and peptide-bond synthesis on native or reconstituted 70S ribosomes in vitro. Probably functions indirectly by altering the affinity of the ribosome for aminoacyl-tRNA, thus increasing their reactivity as acceptors for peptidyl transferase. This Bacillus licheniformis (strain ATCC 14580 / DSM 13 / JCM 2505 / CCUG 7422 / NBRC 12200 / NCIMB 9375 / NCTC 10341 / NRRL NRS-1264 / Gibson 46) protein is Elongation factor P.